The following is a 99-amino-acid chain: U1-theraphotoxin-Lsp1c (99 aa).

The signal sequence occupies residues 1–23 (MRKITIRALLLCSLLLVFHTSAA). A propeptide spanning residues 24–50 (AELQAQEGHLMIPGDTDTALETVDDER) is cleaved from the precursor. 4 disulfides stabilise this stretch: Cys-54–Cys-67, Cys-58–Cys-91, Cys-72–Cys-74, and Cys-85–Cys-96.

It belongs to the neurotoxin 12 (Hwtx-2) family. 04 (lasiotoxin) subfamily. As to expression, expressed by the venom gland.

It is found in the secreted. Functionally, toxin that causes irreversible contractile paralysis into adult Aedes aegypti resulting in 100% mortality after 24 hours. The protein is U1-theraphotoxin-Lsp1c of Lasiodora sp. (strain IBSP 8539) (Brazilian salmon pink birdeater).